The chain runs to 525 residues: Phosphatidylinositol 4-kinase alpha 2 (525 aa).

The tract at residues 163 to 278 (SDVRQHIVDG…VKPQACIFKV (116 aa)) is pleckstrin homology (PH) domain conferring phosphoinositide binding specificity. Positions 239–509 (VDSGIPLQSA…VCTDAYNKWT (271 aa)) constitute a PI3K/PI4K catalytic domain. Residues 245-251 (LQSAAKV) form a G-loop region. The segment at 373-381 (QPKDRHNGN) is catalytic loop. Residues 392–417 (HIDFGFILETSPGGNMRFENAHFKLS) form an activation loop region.

This sequence belongs to the PI3/PI4-kinase family. Type III PI4K subfamily.

The protein localises to the membrane. It catalyses the reaction a 1,2-diacyl-sn-glycero-3-phospho-(1D-myo-inositol) + ATP = a 1,2-diacyl-sn-glycero-3-phospho-(1D-myo-inositol 4-phosphate) + ADP + H(+). Acts on phosphatidylinositol (PtdIns) in the first committed step in the production of the second messenger inositol-1,4,5,-trisphosphate. This is Phosphatidylinositol 4-kinase alpha 2 (PI4KA2) from Arabidopsis thaliana (Mouse-ear cress).